Consider the following 222-residue polypeptide: Probable mitochondrial import inner membrane translocase subunit Tim17 3 (222 aa).

3 helical membrane passes run 16–36, 60–80, and 115–135; these read CGCA…LKGF, SIAG…CALV, and ALVG…VATI.

This sequence belongs to the Tim17/Tim22/Tim23 family. Component of the TIM23 complex at least composed of Tim23, Tim17 (Tim17a1, Tim17a2 or Tim17b1) and a Tim50. The complex interacts with the Tim44 component of the PAM complex.

Its subcellular location is the mitochondrion inner membrane. In terms of biological role, essential component of the TIM23 complex, a complex that mediates the translocation of transit peptide-containing proteins across the mitochondrial inner membrane. This Drosophila melanogaster (Fruit fly) protein is Probable mitochondrial import inner membrane translocase subunit Tim17 3 (Tim17a1).